The following is a 212-amino-acid chain: RNA chaperone ProQ (212 aa).

The disordered stretch occupies residues 107–153 (QDKAKAKRVAQAKSANPAAKTAKKPVKKPVAKRPKPAQSSKPAKEPV). The span at 117 to 126 (QAKSANPAAK) shows a compositional bias: low complexity. Positions 127-141 (TAKKPVKKPVAKRPK) are enriched in basic residues.

Belongs to the ProQ family.

Its subcellular location is the cytoplasm. Its function is as follows. RNA chaperone with significant RNA binding, RNA strand exchange and RNA duplexing activities. In Shewanella pealeana (strain ATCC 700345 / ANG-SQ1), this protein is RNA chaperone ProQ.